Here is a 741-residue protein sequence, read N- to C-terminus: Nuclear poly(A) polymerase 4 (741 aa).

ATP-binding positions include 101–103 (FGS), 113–116 (ADID), 114–116 (DID), aspartate 169, lysine 230, tyrosine 239, and 248–249 (GV). Positions 114, 116, and 169 each coordinate Mg(2+). The Nuclear localization signal signature appears at 485–492 (RRRQLPPF). Disordered stretches follow at residues 494–556 (FPNG…LSPQ) and 683–741 (YEGF…RLLT). The span at 534-551 (KNDSEMMDVRPEKPEKRA) shows a compositional bias: basic and acidic residues. The segment covering 701–717 (LYSQSGMSEDLQSNSLV) has biased composition (polar residues). Over residues 721–731 (EKSEDRARSES) the composition is skewed to basic and acidic residues. Residues 732 to 741 (FQKSQIRLLT) show a composition bias toward polar residues.

It belongs to the poly(A) polymerase family. As to quaternary structure, monomer. Forms a complex with cleavage and polyadenylation specificity factor (CPSF) subunits CFIS2, FIPS3, PAPS1, PABN1, PABN2, PABN3 and FIPS5. It depends on Mg(2+) as a cofactor. The cofactor is Mn(2+). As to expression, mostly expressed in flowers (very active in pollen, sepals, styles, and stigmas), cotyledons and hypocotyls, and, to a lower extent, in roots (confined to the vascular tissue in the radicle) and leaves (in the vascular tissue and leaf petioles). Barely detected in stems. Active in the primary and secondary root systems.

It localises to the nucleus. It carries out the reaction RNA(n) + ATP = RNA(n)-3'-adenine ribonucleotide + diphosphate. Its function is as follows. Essential protein. Polymerase that creates the 3'-poly(A) tail of mRNA's. Also required for the endoribonucleolytic cleavage reaction at some polyadenylation sites. May acquire specificity through interaction with a cleavage and polyadenylation specificity factor (CPSF) at its C-terminus. The protein is Nuclear poly(A) polymerase 4 of Arabidopsis thaliana (Mouse-ear cress).